A 351-amino-acid polypeptide reads, in one-letter code: Methionine import ATP-binding protein MetN (351 aa).

Residues 4–249 (VQLDHVSVTF…PKAELTQKFV (246 aa)) form the ABC transporter domain. 41–48 (GFSGAGKS) contacts ATP.

The protein belongs to the ABC transporter superfamily. Methionine importer (TC 3.A.1.24) family. As to quaternary structure, the complex is composed of two ATP-binding proteins (MetN), two transmembrane proteins (MetI) and a solute-binding protein (MetQ).

The protein localises to the cell membrane. It carries out the reaction L-methionine(out) + ATP + H2O = L-methionine(in) + ADP + phosphate + H(+). The enzyme catalyses D-methionine(out) + ATP + H2O = D-methionine(in) + ADP + phosphate + H(+). Its function is as follows. Part of the ABC transporter complex MetNIQ involved in methionine import. Responsible for energy coupling to the transport system. The chain is Methionine import ATP-binding protein MetN from Lactobacillus delbrueckii subsp. bulgaricus (strain ATCC 11842 / DSM 20081 / BCRC 10696 / JCM 1002 / NBRC 13953 / NCIMB 11778 / NCTC 12712 / WDCM 00102 / Lb 14).